A 118-amino-acid polypeptide reads, in one-letter code: Large ribosomal subunit protein bL20 (118 aa).

It belongs to the bacterial ribosomal protein bL20 family.

Binds directly to 23S ribosomal RNA and is necessary for the in vitro assembly process of the 50S ribosomal subunit. It is not involved in the protein synthesizing functions of that subunit. This is Large ribosomal subunit protein bL20 from Elusimicrobium minutum (strain Pei191).